A 741-amino-acid polypeptide reads, in one-letter code: NAD(P)H-quinone oxidoreductase subunit 5, chloroplastic (741 aa).

16 helical membrane passes run 9-29 (WVIP…LFFI), 39-59 (IWAF…IQLS), 89-109 (IDPL…LVLI), 125-145 (FVYI…SNLI), 147-167 (IYFF…FWFT), 185-205 (GDFG…SLEF), 219-239 (NGIN…GAVA), 258-278 (TPIS…FLLA), 280-300 (LFPL…VGTI), 327-347 (LGYM…FHLI), 354-374 (ALLF…VGYS), 396-416 (TTFL…CFWS), 425-445 (WLYS…TAFY), 542-562 (LFPL…GISF), 605-625 (AISS…LYGS), and 721-741 (ISSY…FFIS).

This sequence belongs to the complex I subunit 5 family. NDH is composed of at least 16 different subunits, 5 of which are encoded in the nucleus.

The protein resides in the plastid. It is found in the chloroplast thylakoid membrane. The catalysed reaction is a plastoquinone + NADH + (n+1) H(+)(in) = a plastoquinol + NAD(+) + n H(+)(out). It carries out the reaction a plastoquinone + NADPH + (n+1) H(+)(in) = a plastoquinol + NADP(+) + n H(+)(out). In terms of biological role, NDH shuttles electrons from NAD(P)H:plastoquinone, via FMN and iron-sulfur (Fe-S) centers, to quinones in the photosynthetic chain and possibly in a chloroplast respiratory chain. The immediate electron acceptor for the enzyme in this species is believed to be plastoquinone. Couples the redox reaction to proton translocation, and thus conserves the redox energy in a proton gradient. The polypeptide is NAD(P)H-quinone oxidoreductase subunit 5, chloroplastic (ndhF) (Lolium perenne (Perennial ryegrass)).